Reading from the N-terminus, the 623-residue chain is mRNA-capping enzyme (623 aa).

A TPase region spans residues 13–224 (MGLPDRWLHC…IDNGRPSTSQ (212 aa)). The region spanning 44–196 (YDNQIAERRY…YDPTEDDKIL (153 aa)) is the Tyrosine-protein phosphatase domain. The Phosphocysteine intermediate role is filled by Cys136. Residues 213–229 (TQIDNGRPSTSQQIPAT) show a composition bias toward polar residues. The interval 213 to 243 (TQIDNGRPSTSQQIPATNGNNNQNGNQLSGG) is disordered. The segment covering 230 to 239 (NGNNNQNGNQ) has biased composition (low complexity). Positions 241–585 (SGGGDNSKLF…NPVTETYLIE (345 aa)) are GTase. Residue Lys311 is the N6-GMP-lysine intermediate of the active site. Residues Arg316, Arg331, 357–359 (DTE), 477–479 (KWK), and 553–558 (RERTDK) each bind GTP. The tract at residues 603–623 (HHQIHQQQLHEGEPEARRQKL) is disordered. The span at 610–623 (QLHEGEPEARRQKL) shows a compositional bias: basic and acidic residues.

The protein in the N-terminal section; belongs to the non-receptor class of the protein-tyrosine phosphatase family. In the C-terminal section; belongs to the eukaryotic GTase family.

It is found in the nucleus. The catalysed reaction is a 5'-end triphospho-ribonucleoside in mRNA + H2O = a 5'-end diphospho-ribonucleoside in mRNA + phosphate + H(+). It catalyses the reaction a 5'-end diphospho-ribonucleoside in mRNA + GTP + H(+) = a 5'-end (5'-triphosphoguanosine)-ribonucleoside in mRNA + diphosphate. With respect to regulation, RNA triphosphatase activity is inhibited by magnesium. In terms of biological role, bifunctional mRNA-capping enzyme exhibiting RNA 5'-triphosphate monophosphatase activity in the N-terminal part and mRNA guanylyltransferase activity in the C-terminal part. Catalyzes the first two steps of cap formation: by removing the gamma-phosphate from the 5'-triphosphate end of nascent mRNA to yield a diphosphate end, and by transferring the GMP moiety of GTP to the 5'-diphosphate terminus via a covalent enzyme-GMP reaction intermediate. The polypeptide is mRNA-capping enzyme (cel-1) (Caenorhabditis elegans).